The chain runs to 158 residues: Transcription elongation factor GreA (158 aa).

This sequence belongs to the GreA/GreB family.

Its function is as follows. Necessary for efficient RNA polymerase transcription elongation past template-encoded arresting sites. The arresting sites in DNA have the property of trapping a certain fraction of elongating RNA polymerases that pass through, resulting in locked ternary complexes. Cleavage of the nascent transcript by cleavage factors such as GreA or GreB allows the resumption of elongation from the new 3'terminus. GreA releases sequences of 2 to 3 nucleotides. The protein is Transcription elongation factor GreA of Baumannia cicadellinicola subsp. Homalodisca coagulata.